The chain runs to 382 residues: MAQIREIDVGEVRTRFARGWHCLGLSRTFKDGKPHAVEAFGTKLVVWADSNGEPKVLDAYCRHMGGDLSQGEIKGDSVACPFHDWRWGGNGKCTDIPYARRVPPLARTRSWITMEKHGQLFVWNDPEGNTPPPEVTIPEIEQYGSDEWTDWTWNQIRIEGSNCREIIDNVVDMAHFFYIHYAFPTFFKNVFEGHIAEQYLNTRGRPDKGMATQYGLESTLESYAAYYGPSYMINPLKNNYGGYQTESVLINCHYPITHDSFMLQYGIIVKKPQGMSPEQSDVLAAKLTEGVGEGFLQDVEIWKNKTKIENPLLCEEDGPVYQLRRWYEQFYVDVADVTEKMTGRFEFEVDTAKANEAWEKEVAENLERKKREEEQGKQEAEV.

A Rieske domain is found at 20-122 (WHCLGLSRTF…TMEKHGQLFV (103 aa)). [2Fe-2S] cluster is bound by residues C61, H63, C80, and H83. N169, H175, H180, and D298 together coordinate Fe cation.

In terms of assembly, homotrimer. The two-component system 3-ketosteroid-9-alpha-monooxygenase is composed of an oxygenase component KshA and a reductase component KshB. The cofactor is [2Fe-2S] cluster. Fe cation serves as cofactor.

It catalyses the reaction androsta-1,4-diene-3,17-dione + 2 reduced [2Fe-2S]-[ferredoxin] + O2 + 2 H(+) = 9alpha-hydroxyandrosta-1,4-diene-3,17-dione + 2 oxidized [2Fe-2S]-[ferredoxin] + H2O. Functionally, in vitro, catalyzes the introduction of a 9alpha-hydroxyl moiety into the ring B of 3-ketosteroid substrates such as 1,4-androstadiene-3,17-dione (ADD), 4-androstene-3,17-dione (AD), 4-androstene-17beta-ol-3-one (testosterone), 4-pregnene-3,20-dione (progesterone), 23,24-bisnorcholesta-4-ene-22-oate and 23,24-bisnorcholesta-1,4-diene-22-oate. This chain is 3-ketosteroid-9-alpha-monooxygenase, oxygenase component, found in Rhodococcus rhodochrous.